A 431-amino-acid chain; its full sequence is F-box/kelch-repeat protein At4g19930 (431 aa).

Residues 37–83 form the F-box domain; that stretch reads HEPMPYIPFDLVIEILTRLPAKSLMRFKSVSKLWSSLICSRTFTNRL. 2 Kelch repeats span residues 143–189 and 227–275; these read LSHV…KNKK and WVFI…PMLV.

In Arabidopsis thaliana (Mouse-ear cress), this protein is F-box/kelch-repeat protein At4g19930.